The following is a 354-amino-acid chain: Kelch domain-containing protein 8B (354 aa).

8 Kelch repeats span residues 1-31 (MAAGGGRAFAWQVFPPMPTCRVYGTVAHQDG), 32-79 (HLLV…VLGK), 81-127 (VLVV…ERDG), 128-175 (MVYA…LHGN), 176-222 (KIYV…MAEG), 224-281 (VFSL…SLGG), 282-329 (NIVA…QAGP), and 331-354 (LFVIGGVAQGPSQAVEALCLRDGV).

Its subcellular location is the cytoplasm. It localises to the midbody. Its function is as follows. Involved in pinching off the separated nuclei at the cleavage furrow and in cytokinesis. Required for mitotic integrity and maintenance of chromosomal stability. Protects cells against mitotic errors, centrosomal amplification, micronucleus formation and aneuploidy. Plays a key role of midbody function involving abscission of the daughter cells during cytokinesis and appropriate chromosomal and nuclear segregation into the daughter cells. The chain is Kelch domain-containing protein 8B (Klhdc8b) from Mus musculus (Mouse).